A 627-amino-acid polypeptide reads, in one-letter code: tRNA uridine 5-carboxymethylaminomethyl modification enzyme MnmG (627 aa).

Residues 13 to 18 (GGGHAG), valine 125, and serine 180 each bind FAD. An NAD(+)-binding site is contributed by 274–288 (GPRYCPSIEDKVVRF). FAD is bound at residue glutamine 371.

Belongs to the MnmG family. Homodimer. Heterotetramer of two MnmE and two MnmG subunits. It depends on FAD as a cofactor.

It localises to the cytoplasm. In terms of biological role, NAD-binding protein involved in the addition of a carboxymethylaminomethyl (cmnm) group at the wobble position (U34) of certain tRNAs, forming tRNA-cmnm(5)s(2)U34. The chain is tRNA uridine 5-carboxymethylaminomethyl modification enzyme MnmG from Francisella tularensis subsp. holarctica (strain FTNF002-00 / FTA).